We begin with the raw amino-acid sequence, 583 residues long: MDRNSVTGLAIIAVIMIVWLQFMSPEKKPLLPSKTVKTETVVQSDVQVPAVSIPAADNFGVFASSSGGQEKLLKVENDLFRATLSSKGATLKSLVLKKHLDGNRLPFDLVSNGKNGALSLLFLTREGKKIDTRDLYFSNVTLDTLRTIKGKESYAVRYHLDVAPQQAIDIIFGFTGDSYKVDYDVKLTGFASELAGNEYQVQWDGGVPFSEKNRPDEAQSALASAYLGGSLVKLDASKEKQSYREEQSGEAQWVAVRNKYFVAALIPHGKSAGIYLDGKRETGNDFESYLAALKIAVPSTAGVVDDKFSLYLGPLDYNIVKAQKVGLEKIMDFGWDWLTRPFAEFIILPVFSWMNGFVSNYGLIIIIFAFLIKLVTYPLSMASTKSMKKMSALQPALKELQEKYKDNPAKLQSELGRIYKEAGVNPIGGCLPVVLQMPLLFAMFYVFRSSIELRQHSFLWAKDLSVPDSIFDFGFAIPMYGSHIAVFPILMAVTVYLQQKITPTTQSNEQMKVMMYMFPAMMLLFFNNMPAGLGLYYLMFNIFSVAQQFYINKTTTAADMPQVNLGLAPAGAQRKQKKGGAKK.

A run of 6 helical transmembrane segments spans residues 5 to 25 (SVTGLAIIAVIMIVWLQFMSP), 341 to 361 (PFAEFIILPVFSWMNGFVSNY), 362 to 382 (GLIIIIFAFLIKLVTYPLSMA), 427 to 447 (IGGCLPVVLQMPLLFAMFYVF), 473 to 493 (FGFAIPMYGSHIAVFPILMAV), and 520 to 540 (AMMLLFFNNMPAGLGLYYLMF).

This sequence belongs to the OXA1/ALB3/YidC family. Type 1 subfamily. As to quaternary structure, interacts with the Sec translocase complex via SecD. Specifically interacts with transmembrane segments of nascent integral membrane proteins during membrane integration.

Its subcellular location is the cell inner membrane. Its function is as follows. Required for the insertion and/or proper folding and/or complex formation of integral membrane proteins into the membrane. Involved in integration of membrane proteins that insert both dependently and independently of the Sec translocase complex, as well as at least some lipoproteins. Aids folding of multispanning membrane proteins. In Pelodictyon phaeoclathratiforme (strain DSM 5477 / BU-1), this protein is Membrane protein insertase YidC.